A 292-amino-acid polypeptide reads, in one-letter code: Phosphatidylserine decarboxylase proenzyme (292 aa).

Active-site charge relay system; for autoendoproteolytic cleavage activity residues include Asp-89, His-146, and Ser-252. The Schiff-base intermediate with substrate; via pyruvic acid; for decarboxylase activity role is filled by Ser-252. Ser-252 is subject to Pyruvic acid (Ser); by autocatalysis.

It belongs to the phosphatidylserine decarboxylase family. PSD-B subfamily. Prokaryotic type I sub-subfamily. As to quaternary structure, heterodimer of a large membrane-associated beta subunit and a small pyruvoyl-containing alpha subunit. Pyruvate serves as cofactor. Post-translationally, is synthesized initially as an inactive proenzyme. Formation of the active enzyme involves a self-maturation process in which the active site pyruvoyl group is generated from an internal serine residue via an autocatalytic post-translational modification. Two non-identical subunits are generated from the proenzyme in this reaction, and the pyruvate is formed at the N-terminus of the alpha chain, which is derived from the carboxyl end of the proenzyme. The autoendoproteolytic cleavage occurs by a canonical serine protease mechanism, in which the side chain hydroxyl group of the serine supplies its oxygen atom to form the C-terminus of the beta chain, while the remainder of the serine residue undergoes an oxidative deamination to produce ammonia and the pyruvoyl prosthetic group on the alpha chain. During this reaction, the Ser that is part of the protease active site of the proenzyme becomes the pyruvoyl prosthetic group, which constitutes an essential element of the active site of the mature decarboxylase.

The protein resides in the cell membrane. It catalyses the reaction a 1,2-diacyl-sn-glycero-3-phospho-L-serine + H(+) = a 1,2-diacyl-sn-glycero-3-phosphoethanolamine + CO2. It participates in phospholipid metabolism; phosphatidylethanolamine biosynthesis; phosphatidylethanolamine from CDP-diacylglycerol: step 2/2. Catalyzes the formation of phosphatidylethanolamine (PtdEtn) from phosphatidylserine (PtdSer). The protein is Phosphatidylserine decarboxylase proenzyme of Shewanella baltica (strain OS185).